Reading from the N-terminus, the 157-residue chain is Transcriptional repressor NrdR (157 aa).

A zinc finger spans residues 3 to 34 (CPFCNAEDTKVIDSRLVEEGTQVRRRRECLKC). An ATP-cone domain is found at 49-139 (PRIIKRDGRR…VYRSFQDINA (91 aa)).

It belongs to the NrdR family. Zn(2+) is required as a cofactor.

Functionally, negatively regulates transcription of bacterial ribonucleotide reductase nrd genes and operons by binding to NrdR-boxes. This Coxiella burnetii (strain CbuK_Q154) (Coxiella burnetii (strain Q154)) protein is Transcriptional repressor NrdR.